Reading from the N-terminus, the 738-residue chain is Transcription activator of gluconeogenesis SMAC_06113 (738 aa).

Positions 1–65 are disordered; it reads MPDDVGPAEA…KYDPKDPLRP (65 aa). Composition is skewed to basic and acidic residues over residues 28 to 39 and 51 to 64; these read ATTKDDDEKMAE and GDQK…DPLR. The segment at residues 74 to 102 is a DNA-binding region (zn(2)-C6 fungal-type); sequence CYACQRAHLTCGDERPCQRCIKRGLAEAC. Disordered regions lie at residues 255 to 278, 328 to 404, 530 to 579, and 636 to 673; these read SSGA…GDVG, HAYA…KRQR, GTNS…KEQP, and SVPT…TGAN. Polar residues-rich tracts occupy residues 337–351 and 530–540; these read TSLQ…SPQP and GTNSDTLSVSS. In terms of domain architecture, PAS spans 475–546; sequence ALFEHEEFMH…SVSSKGGRGG (72 aa). Composition is skewed to low complexity over residues 568–579 and 636–655; these read QQQQSQQQKEQP and SVPT…VNGG.

This sequence belongs to the ERT1/acuK family.

Its subcellular location is the nucleus. Its function is as follows. Transcription factor which regulates nonfermentable carbon utilization. Activator of gluconeogenetic genes. This Sordaria macrospora (strain ATCC MYA-333 / DSM 997 / K(L3346) / K-hell) protein is Transcription activator of gluconeogenesis SMAC_06113.